Here is a 198-residue protein sequence, read N- to C-terminus: Cytokinin riboside 5'-monophosphate phosphoribohydrolase (198 aa).

Substrate contacts are provided by residues glutamate 91, 109–110 (RK), 126–132 (GVGTAEE), and threonine 138.

The protein belongs to the LOG family.

The catalysed reaction is N(6)-(dimethylallyl)adenosine 5'-phosphate + H2O = N(6)-dimethylallyladenine + D-ribose 5-phosphate. It carries out the reaction 9-ribosyl-trans-zeatin 5'-phosphate + H2O = trans-zeatin + D-ribose 5-phosphate. Its function is as follows. Catalyzes the hydrolytic removal of ribose 5'-monophosphate from nitrogen N6-modified adenosines, the final step of bioactive cytokinin synthesis. The chain is Cytokinin riboside 5'-monophosphate phosphoribohydrolase (fas6) from Rhodococcoides fascians (Rhodococcus fascians).